We begin with the raw amino-acid sequence, 330 residues long: MTDRQTDRQTDRQTDRQTDRQTDRQTDRQTDGRTVSQTMNIIFSSDHYYAPYLAVSIFSIIKNTPKKINFYILDMKINQENKTIINNLASAYSCKVFFLPVCESDFQNFPKTIDYISLATYARLNLTKYIKNIEKAIYIDVDTLTNSSLQELWNIDITNYYLAACRDTFIDVKNEAYKKTIGLEGYSYFNAGILLINLNKWKEENIFQKSINWMNKYNNVMKYQDQDILNGICKGKVKFINNRFNFTPTDRDLIKKKNLLCVKMPIVISHYCGPNKFWHKKCSHLNCHIGNLLLKEMDKIIDIPSSWYDHFEKIPFLIKIKRLRKRIKDN.

A compositionally biased stretch (basic and acidic residues) spans 1–31; it reads MTDRQTDRQTDRQTDRQTDRQTDRQTDRQTD. A disordered region spans residues 1 to 32; that stretch reads MTDRQTDRQTDRQTDRQTDRQTDRQTDRQTDG. UDP-binding positions include 44–49 and 140–141; these read SSDHYY and DV. Mn(2+) contacts are provided by aspartate 140, aspartate 142, and histidine 270. 270–276 contributes to the UDP binding site; it reads HYCGPNK.

It belongs to the glycosyltransferase 8 family.

In Haemophilus influenzae (strain ATCC 51907 / DSM 11121 / KW20 / Rd), this protein is Putative glycosyltransferase HI_0258.